The chain runs to 159 residues: Putative ribosomal RNA large subunit methyltransferase H (159 aa).

S-adenosyl-L-methionine is bound by residues Leu-76, Gly-108, and 127 to 132 (LSPLTF).

Belongs to the RNA methyltransferase RlmH family.

It localises to the cytoplasm. It catalyses the reaction pseudouridine(1915) in 23S rRNA + S-adenosyl-L-methionine = N(3)-methylpseudouridine(1915) in 23S rRNA + S-adenosyl-L-homocysteine + H(+). Its function is as follows. Specifically methylates the pseudouridine at position 1915 (m3Psi1915) in 23S rRNA. This is Putative ribosomal RNA large subunit methyltransferase H from Methanoregula boonei (strain DSM 21154 / JCM 14090 / 6A8).